We begin with the raw amino-acid sequence, 448 residues long: Trigger factor (448 aa).

Residues 167-253 (GSIVRVDFVE…VKDIKRRDIP (87 aa)) enclose the PPIase FKBP-type domain.

It belongs to the FKBP-type PPIase family. Tig subfamily.

The protein resides in the cytoplasm. It carries out the reaction [protein]-peptidylproline (omega=180) = [protein]-peptidylproline (omega=0). Functionally, involved in protein export. Acts as a chaperone by maintaining the newly synthesized protein in an open conformation. Functions as a peptidyl-prolyl cis-trans isomerase. The sequence is that of Trigger factor from Borrelia recurrentis (strain A1).